We begin with the raw amino-acid sequence, 83 residues long: Small ribosomal subunit protein bS16c (83 aa).

Belongs to the bacterial ribosomal protein bS16 family.

The protein localises to the plastid. It localises to the chloroplast. This chain is Small ribosomal subunit protein bS16c, found in Chaetosphaeridium globosum (Charophycean green alga).